The primary structure comprises 1036 residues: MESCARSASQMSSSSCCRCSSFNQKLKQGGIGGGSLPVSFSCVMIGGGGGRRLIDQERGKVRGRERKIGELMQVRASAQGGLLNLGNLLFNFKGGDPAESTKQQYASTVTLINQLEPQISSLTDSQLTDRTSLLRQRALSGESLDSILPEAFAVVREASKRVLGLRPFDVQLIGGMVLHKGEIAEMRTGEGKTLVAILPAYLNALTGKGVHVVTVNDYLARRDCEWVGQVARFLGLKVGLVQQNMTSEVRRENYLCDITYVTNSELGFDFLRDNLATSVDELVLRGFNFCVIDEVDSILIDEARTPLIISGPAEKPSERYYKAAKIAAAFERDIHYTVDEKQKTVLIMEQGYQDAEEILDVEDLYDPREQWALYILNAIKAKELFLKDVNYIIRGKEILIVDEFTGRVMQGRRWSDGLHQAVEAKEGVPIQNETITLASISYQNFFLQFPKLCGMTGTAATESAEFESIYKLKVTIVPTNKPMIRKDESDVVFRATSGKWRAVVVEISRMHKTGLPVLVGTTSVEQSESLSEQLQQASIPHEVLNAKPENVEREAEIVAQSGRLGAVTIATNMAGRGTDIILGGNAEFMARLKIREMLMPRVVRPGDGGFVSMKKPPPMKTWKVKETLFPCKLSQKNAKLVDEAVQLAVKTWGQRSLSELEAEERLSYSCEKGPAQDEVIAKLRHAFLEVAKEYKTFTDEEKNKVVLAGGLHVIGTERHESRRIDNQLRGRSGRQGDPGSSRFFLSLEDNIFRVFGGDRIQGLMRAFRVEDLPIESKMLTRALDEAQRKVENYFFDIRKQLFEYDEVLNSQRDRVYVERRRALESDNLESLLIEYAELTMDDILEANIGSDAPKENWDLEKLIAKLQQYCYLLNDLTPELLSNNCSTYEDLQDYLRRCGREAYLQKKDMVENQAPGLMKEAERFLILSNIDRLWKEHLQAIKFVQQAVGLRGYAQRDPLIEYKLEGYNLFLEMMAQIRRNVIYSAYQFKPVVVKNQEQQQKGKPDSSNVENKRIGDANLNPVSVTESPSSDSPQNT.

The N-terminal 76 residues, 1–76 (MESCARSASQ…KIGELMQVRA (76 aa)), are a transit peptide targeting the chloroplast. 186 to 193 (MRTGEGKT) serves as a coordination point for ATP. The interval 995–1036 (NQEQQQKGKPDSSNVENKRIGDANLNPVSVTESPSSDSPQNT) is disordered. Over residues 1000-1015 (QKGKPDSSNVENKRIG) the composition is skewed to basic and acidic residues. The segment covering 1020–1036 (NPVSVTESPSSDSPQNT) has biased composition (polar residues).

This sequence belongs to the SecA family.

The protein resides in the plastid. The protein localises to the chloroplast stroma. It localises to the chloroplast thylakoid membrane. It carries out the reaction ATP + H2O + chloroplast-proteinSide 1 = ADP + phosphate + chloroplast-proteinSide 2.. In terms of biological role, has a central role in coupling the hydrolysis of ATP to the transfer of proteins across the thylakoid membrane. This Spinacia oleracea (Spinach) protein is Protein translocase subunit SecA, chloroplastic.